A 435-amino-acid polypeptide reads, in one-letter code: Probable histidine--tRNA ligase, cytoplasmic (435 aa).

It belongs to the class-II aminoacyl-tRNA synthetase family.

The protein localises to the cytoplasm. It carries out the reaction tRNA(His) + L-histidine + ATP = L-histidyl-tRNA(His) + AMP + diphosphate + H(+). The sequence is that of Probable histidine--tRNA ligase, cytoplasmic from Encephalitozoon cuniculi (strain GB-M1) (Microsporidian parasite).